A 110-amino-acid polypeptide reads, in one-letter code: Nucleoid-associated protein Tola_2216 (110 aa).

It belongs to the YbaB/EbfC family. Homodimer.

The protein resides in the cytoplasm. It is found in the nucleoid. Its function is as follows. Binds to DNA and alters its conformation. May be involved in regulation of gene expression, nucleoid organization and DNA protection. This is Nucleoid-associated protein Tola_2216 from Tolumonas auensis (strain DSM 9187 / NBRC 110442 / TA 4).